A 146-amino-acid chain; its full sequence is Ribonuclease H (146 aa).

The RNase H type-1 domain maps to 1 to 143 (MRKKIIIYTD…CDYLARQAIK (143 aa)). Mg(2+) contacts are provided by aspartate 10, glutamate 48, aspartate 70, and aspartate 135.

Belongs to the RNase H family. As to quaternary structure, monomer. The cofactor is Mg(2+).

Its subcellular location is the cytoplasm. The enzyme catalyses Endonucleolytic cleavage to 5'-phosphomonoester.. In terms of biological role, endonuclease that specifically degrades the RNA of RNA-DNA hybrids. The sequence is that of Ribonuclease H from Prosthecochloris aestuarii (strain DSM 271 / SK 413).